The following is a 65-amino-acid chain: Large ribosomal subunit protein bL35 (65 aa).

A disordered region spans residues methionine 1–phenylalanine 22. Basic residues predominate over residues alanine 10–phenylalanine 22.

The protein belongs to the bacterial ribosomal protein bL35 family.

The polypeptide is Large ribosomal subunit protein bL35 (Serratia proteamaculans (strain 568)).